Consider the following 396-residue polypeptide: Bone morphogenetic protein 2 (396 aa).

The first 23 residues, 1–23 (MVAGTRCLLALLLPQVLLGGAAG), serve as a signal peptide directing secretion. Positions 24 to 282 (LVPELGRRKF…GHPLHKREKR (259 aa)) are cleaved as a propeptide — cleaved by PCSK5. Residues 84–121 (RRHSGQPGSPAPDHRLERAASRANTVRSFHHEESLEEL) are disordered. At Ser-87 the chain carries Phosphoserine. N-linked (GlcNAc...) asparagine glycans are attached at residues Asn-135, Asn-163, Asn-164, and Asn-200. The segment at 271 to 293 (GKGHPLHKREKRQAKHKQRKRLK) is disordered. Positions 274-293 (HPLHKREKRQAKHKQRKRLK) are enriched in basic residues. 3 cysteine pairs are disulfide-bonded: Cys-296/Cys-361, Cys-325/Cys-393, and Cys-329/Cys-395. N-linked (GlcNAc...) (high mannose) asparagine glycosylation is present at Asn-338.

It belongs to the TGF-beta family. In terms of assembly, homodimer; disulfide-linked. Interacts with SOSTDC1. Interacts with GREM2, RGMA, RGMB and RGMC. Interacts with ASPN. Interacts with MAFP5. Interacts with FBN1 (via N-terminal domain) and FBN2. Interacts with type I receptor BMPR1A. Interacts with type II receptor BMPR2. Interacts with SCUBE3. Interacts with TNFAIP6 (primarily via Link domain); this interaction is inhibited by hyaluronan. Interacts with ERFE. Interacts with BMPR1A/ALK3; the interaction may induce HAMP expression. Forms heterodimers with BMP6 in vitro; the heterodimer then binds to its receptor BMPR1A /ALK3 and may induce HAMP expression. Interacts with TGFBR3. In terms of tissue distribution, particularly abundant in lung, spleen and colon and in low but significant levels in heart, brain, placenta, liver, skeletal muscle, kidney, pancreas, prostate, ovary and small intestine.

It is found in the secreted. Growth factor of the TGF-beta superfamily that plays essential roles in many developmental processes, including cardiogenesis, neurogenesis, and osteogenesis. Induces cartilage and bone formation. Initiates the canonical BMP signaling cascade by associating with type I receptor BMPR1A and type II receptor BMPR2. Once all three components are bound together in a complex at the cell surface, BMPR2 phosphorylates and activates BMPR1A. In turn, BMPR1A propagates signal by phosphorylating SMAD1/5/8 that travel to the nucleus and act as activators and repressors of transcription of target genes. Also acts to promote expression of HAMP, via the interaction with its receptor BMPR1A/ALK3. Can also signal through non-canonical pathways such as ERK/MAP kinase signaling cascade that regulates osteoblast differentiation. Also stimulates the differentiation of myoblasts into osteoblasts via the EIF2AK3-EIF2A-ATF4 pathway by stimulating EIF2A phosphorylation which leads to increased expression of ATF4 which plays a central role in osteoblast differentiation. Acts as a positive regulator of odontoblast differentiation during mesenchymal tooth germ formation, expression is repressed during the bell stage by MSX1-mediated inhibition of CTNNB1 signaling. The protein is Bone morphogenetic protein 2 (BMP2) of Homo sapiens (Human).